A 325-amino-acid polypeptide reads, in one-letter code: NADH-quinone oxidoreductase subunit H (325 aa).

The next 9 membrane-spanning stretches (helical) occupy residues 11-31, 50-69, 81-101, 114-134, 154-174, 186-206, 237-257, 265-285, and 304-324; these read ILLS…CGAF, NRVG…KMFF, VIFT…FAIV, IGIL…LFAG, VSYE…AGSF, LWNV…GVAV, FFVG…TLFF, LPPF…FILI, and VCLP…LWQA.

It belongs to the complex I subunit 1 family. As to quaternary structure, NDH-1 is composed of 13 different subunits. Subunits NuoA, H, J, K, L, M, N constitute the membrane sector of the complex.

Its subcellular location is the cell inner membrane. It carries out the reaction a quinone + NADH + 5 H(+)(in) = a quinol + NAD(+) + 4 H(+)(out). In terms of biological role, NDH-1 shuttles electrons from NADH, via FMN and iron-sulfur (Fe-S) centers, to quinones in the respiratory chain. The immediate electron acceptor for the enzyme in this species is believed to be ubiquinone. Couples the redox reaction to proton translocation (for every two electrons transferred, four hydrogen ions are translocated across the cytoplasmic membrane), and thus conserves the redox energy in a proton gradient. This subunit may bind ubiquinone. This Salmonella agona (strain SL483) protein is NADH-quinone oxidoreductase subunit H.